Consider the following 30-residue polypeptide: Photosystem I reaction center subunit XII (30 aa).

A helical membrane pass occupies residues 7–26; it reads IMVALFAALFTGILALRLGT.

The protein belongs to the PsaM family.

The protein localises to the plastid. The protein resides in the chloroplast thylakoid membrane. This Mesostigma viride (Green alga) protein is Photosystem I reaction center subunit XII.